The primary structure comprises 889 residues: Translation initiation factor IF-2 (889 aa).

Disordered regions lie at residues 47–85 and 206–302; these read GHLKKQHGDESEAKPNKLTLNRKTKSTLTMGHGSKAKSV and AEAA…FTKP. Composition is skewed to basic and acidic residues over residues 52–61, 214–241, and 252–263; these read QHGDESEAKP, AAKKLAEENEGRWKEQEAERKAKEKEVV, and AEDKSDSADESG. The tr-type G domain maps to 389 to 558; sequence TRAPVVTIMG…LLQSEVLELT (170 aa). The tract at residues 398 to 405 is G1; sequence GHVDHGKT. 398 to 405 is a binding site for GTP; it reads GHVDHGKT. The G2 stretch occupies residues 423 to 427; sequence GITQH. Residues 444-447 form a G3 region; the sequence is DTPG. Residues 444-448 and 498-501 each bind GTP; these read DTPGH and NKMD. A G4 region spans residues 498 to 501; sequence NKMD. The segment at 534 to 536 is G5; sequence SAK.

It belongs to the TRAFAC class translation factor GTPase superfamily. Classic translation factor GTPase family. IF-2 subfamily.

The protein resides in the cytoplasm. One of the essential components for the initiation of protein synthesis. Protects formylmethionyl-tRNA from spontaneous hydrolysis and promotes its binding to the 30S ribosomal subunits. Also involved in the hydrolysis of GTP during the formation of the 70S ribosomal complex. The protein is Translation initiation factor IF-2 of Colwellia psychrerythraea (strain 34H / ATCC BAA-681) (Vibrio psychroerythus).